We begin with the raw amino-acid sequence, 1404 residues long: DNA-directed RNA polymerase subunit beta' (1404 aa).

The Zn(2+) site is built by Cys-70, Cys-72, Cys-85, and Cys-88. Residues Asp-460, Asp-462, and Asp-464 each coordinate Mg(2+). Positions 814, 889, 896, and 899 each coordinate Zn(2+). The segment at Asp-1377–Glu-1404 is disordered. Low complexity predominate over residues Pro-1387 to Glu-1404.

It belongs to the RNA polymerase beta' chain family. The RNAP catalytic core consists of 2 alpha, 1 beta, 1 beta' and 1 omega subunit. When a sigma factor is associated with the core the holoenzyme is formed, which can initiate transcription. Mg(2+) serves as cofactor. Requires Zn(2+) as cofactor.

The enzyme catalyses RNA(n) + a ribonucleoside 5'-triphosphate = RNA(n+1) + diphosphate. Its function is as follows. DNA-dependent RNA polymerase catalyzes the transcription of DNA into RNA using the four ribonucleoside triphosphates as substrates. The protein is DNA-directed RNA polymerase subunit beta' of Xanthomonas euvesicatoria pv. vesicatoria (strain 85-10) (Xanthomonas campestris pv. vesicatoria).